We begin with the raw amino-acid sequence, 377 residues long: tRNA-specific 2-thiouridylase MnmA (377 aa).

ATP is bound by residues 9-16 (AMSGGVDS) and Leu35. The Nucleophile role is filled by Cys105. The cysteines at positions 105 and 201 are disulfide-linked. Gly129 serves as a coordination point for ATP. The segment at 151–153 (KNQ) is interaction with tRNA. The active-site Cysteine persulfide intermediate is Cys201. The tract at residues 307–308 (RY) is interaction with tRNA.

It belongs to the MnmA/TRMU family.

It is found in the cytoplasm. It carries out the reaction S-sulfanyl-L-cysteinyl-[protein] + uridine(34) in tRNA + AH2 + ATP = 2-thiouridine(34) in tRNA + L-cysteinyl-[protein] + A + AMP + diphosphate + H(+). Catalyzes the 2-thiolation of uridine at the wobble position (U34) of tRNA, leading to the formation of s(2)U34. This is tRNA-specific 2-thiouridylase MnmA from Leptospira borgpetersenii serovar Hardjo-bovis (strain JB197).